Reading from the N-terminus, the 278-residue chain is Troponin T, slow skeletal muscle (278 aa).

A compositionally biased stretch (acidic residues) spans 1 to 37 (MSDTEEQEYEEEQPEEEAAEEEEEAPEEPEPVAEPEE). 2 disordered regions span residues 1 to 63 (MSDT…RVDF) and 105 to 153 (RRRS…KKKV). Phosphoserine; by CK2 is present on S2. Over residues 43-55 (SRPVVPPLIPPKI) the composition is skewed to pro residues. The segment covering 105–149 (RRRSERAEQQRFRTEKERERQAKLAEEKMRKEEEEAKKRAEDDAK) has biased composition (basic and acidic residues).

It belongs to the troponin T family. In terms of assembly, interacts with TPM3.

In terms of biological role, troponin T is the tropomyosin-binding subunit of troponin, the thin filament regulatory complex which confers calcium-sensitivity to striated muscle actomyosin ATPase activity. This chain is Troponin T, slow skeletal muscle (TNNT1), found in Homo sapiens (Human).